Here is a 305-residue protein sequence, read N- to C-terminus: Putative lipid kinase USA300HOU_0749 (305 aa).

The DAGKc domain maps to 3–139 (NKYTHGVLFY…YDVIKINNQY (137 aa)). Residues Ser44, 74–80 (GDGTVNE), and Thr101 contribute to the ATP site. Residues Ser220, Asp223, and Glu225 each contribute to the Mg(2+) site. The Proton acceptor role is filled by Glu281.

The protein belongs to the diacylglycerol/lipid kinase family. Mg(2+) serves as cofactor.

In terms of biological role, may catalyze the ATP-dependent phosphorylation of lipids other than diacylglycerol (DAG). In Staphylococcus aureus (strain USA300 / TCH1516), this protein is Putative lipid kinase USA300HOU_0749.